Consider the following 378-residue polypeptide: Anhydro-N-acetylmuramic acid kinase (378 aa).

Residue 22–29 participates in ATP binding; it reads GTSLDGAD.

The protein belongs to the anhydro-N-acetylmuramic acid kinase family.

The catalysed reaction is 1,6-anhydro-N-acetyl-beta-muramate + ATP + H2O = N-acetyl-D-muramate 6-phosphate + ADP + H(+). It functions in the pathway amino-sugar metabolism; 1,6-anhydro-N-acetylmuramate degradation. Its pathway is cell wall biogenesis; peptidoglycan recycling. In terms of biological role, catalyzes the specific phosphorylation of 1,6-anhydro-N-acetylmuramic acid (anhMurNAc) with the simultaneous cleavage of the 1,6-anhydro ring, generating MurNAc-6-P. Is required for the utilization of anhMurNAc either imported from the medium or derived from its own cell wall murein, and thus plays a role in cell wall recycling. This Bordetella petrii (strain ATCC BAA-461 / DSM 12804 / CCUG 43448) protein is Anhydro-N-acetylmuramic acid kinase.